A 504-amino-acid chain; its full sequence is Maturase K (504 aa).

The protein belongs to the intron maturase 2 family. MatK subfamily.

The protein localises to the plastid. It is found in the chloroplast. In terms of biological role, usually encoded in the trnK tRNA gene intron. Probably assists in splicing its own and other chloroplast group II introns. This chain is Maturase K, found in Adenostoma fasciculatum (Chamise).